We begin with the raw amino-acid sequence, 429 residues long: Cell cycle protein kinase spo4 (429 aa).

Residues 40-402 (YHVVKLVGAG…KAKTALQHEF (363 aa)) enclose the Protein kinase domain. Residues 46–54 (VGAGSFSSV) and lysine 95 each bind ATP. Residue aspartate 182 is the Proton acceptor of the active site. Threonine 264 carries the post-translational modification Phosphothreonine.

Belongs to the protein kinase superfamily. Ser/Thr protein kinase family. CDC7 subfamily. Interacts with spo6.

The protein localises to the nucleus. It catalyses the reaction L-seryl-[protein] + ATP = O-phospho-L-seryl-[protein] + ADP + H(+). The enzyme catalyses L-threonyl-[protein] + ATP = O-phospho-L-threonyl-[protein] + ADP + H(+). Functionally, required for the initiation of meiosis II and progression through anaphase II. The chain is Cell cycle protein kinase spo4 (spo4) from Schizosaccharomyces pombe (strain 972 / ATCC 24843) (Fission yeast).